We begin with the raw amino-acid sequence, 309 residues long: Ribosomal RNA small subunit methyltransferase H (309 aa).

Residues 33-35 (GGH), D53, F79, D100, and Q107 contribute to the S-adenosyl-L-methionine site.

This sequence belongs to the methyltransferase superfamily. RsmH family.

The protein resides in the cytoplasm. It carries out the reaction cytidine(1402) in 16S rRNA + S-adenosyl-L-methionine = N(4)-methylcytidine(1402) in 16S rRNA + S-adenosyl-L-homocysteine + H(+). Specifically methylates the N4 position of cytidine in position 1402 (C1402) of 16S rRNA. In Clostridium botulinum (strain Okra / Type B1), this protein is Ribosomal RNA small subunit methyltransferase H.